A 465-amino-acid chain; its full sequence is Cysteine--tRNA ligase (465 aa).

Cysteine 27 contributes to the Zn(2+) binding site. Residues 29–39 carry the 'HIGH' region motif; sequence PTVYNFFHIGN. Zn(2+) is bound by residues cysteine 207, histidine 232, and glutamate 236. Positions 264–268 match the 'KMSKS' region motif; that stretch reads KMSKS. Lysine 267 contacts ATP.

It belongs to the class-I aminoacyl-tRNA synthetase family. Monomer. It depends on Zn(2+) as a cofactor.

It localises to the cytoplasm. It catalyses the reaction tRNA(Cys) + L-cysteine + ATP = L-cysteinyl-tRNA(Cys) + AMP + diphosphate. The chain is Cysteine--tRNA ligase from Clostridium botulinum (strain Loch Maree / Type A3).